Consider the following 414-residue polypeptide: 5-aminolevulinate synthase (414 aa).

Substrate-binding residues include Arg22, Ser133, and Lys152. Residues Ser185, His213, and Thr241 each coordinate pyridoxal 5'-phosphate. The active site involves Lys244. Residue Lys244 is modified to N6-(pyridoxal phosphate)lysine. Positions 273 and 274 each coordinate pyridoxal 5'-phosphate. Thr359 is a substrate binding site.

It belongs to the class-II pyridoxal-phosphate-dependent aminotransferase family. In terms of assembly, homodimer. Pyridoxal 5'-phosphate serves as cofactor.

It carries out the reaction succinyl-CoA + glycine + H(+) = 5-aminolevulinate + CO2 + CoA. It functions in the pathway porphyrin-containing compound metabolism; protoporphyrin-IX biosynthesis; 5-aminolevulinate from glycine: step 1/1. This Rickettsia typhi (strain ATCC VR-144 / Wilmington) protein is 5-aminolevulinate synthase (hemA).